The following is a 387-amino-acid chain: F420-dependent formate dehydrogenase 1 subunit beta (387 aa).

2 4Fe-4S ferredoxin-type domains span residues 275-298 (TIEE…VCPV) and 326-355 (VRMS…ARIF). Cys286, Cys289, Cys292, Cys296, Cys335, Cys338, Cys341, and Cys345 together coordinate [4Fe-4S] cluster. Residues 366–387 (LGYRPGVDDEAPPALGGSCPTQ) form a disordered region.

It belongs to the FrhB family. Dimer of an alpha (FdhA1) and a beta (FdhB1) subunit. The cofactor is [4Fe-4S] cluster. FAD serves as cofactor. It depends on Zn(2+) as a cofactor.

The enzyme catalyses oxidized coenzyme F420-(gamma-L-Glu)(n) + formate + 2 H(+) = reduced coenzyme F420-(gamma-L-Glu)(n) + CO2. Functionally, catalyzes the oxidation of formate to carbon dioxide, with coenzyme F420 as the electron acceptor. In vitro can also use methyl viologen as electron acceptor. This is F420-dependent formate dehydrogenase 1 subunit beta from Methanococcus maripaludis (strain DSM 14266 / JCM 13030 / NBRC 101832 / S2 / LL).